The primary structure comprises 269 residues: Glutamate racemase (269 aa).

Residues 14-15 and 46-47 each bind substrate; these read DS and YS. Catalysis depends on cysteine 78, which acts as the Proton donor/acceptor. Residue 79–80 participates in substrate binding; sequence NT. The active-site Proton donor/acceptor is cysteine 189. 190-191 is a binding site for substrate; the sequence is TH.

The protein belongs to the aspartate/glutamate racemases family.

The catalysed reaction is L-glutamate = D-glutamate. Its pathway is cell wall biogenesis; peptidoglycan biosynthesis. Functionally, provides the (R)-glutamate required for cell wall biosynthesis. This Haemophilus influenzae (strain 86-028NP) protein is Glutamate racemase.